Reading from the N-terminus, the 302-residue chain is Putative T-box protein 34 (302 aa).

Positions 5–180 (IVNEHKYREL…KMNLAPGSSQ (176 aa)) form a DNA-binding region, T-box.

The protein localises to the nucleus. This Caenorhabditis elegans protein is Putative T-box protein 34 (tbx-34).